A 200-amino-acid polypeptide reads, in one-letter code: Protein GrpE (200 aa).

Basic and acidic residues predominate over residues 1 to 12 (MSNEEIKNKDEQ). A disordered region spans residues 1–30 (MSNEEIKNKDEQLQQDAVETEAEVVGTDAD).

It belongs to the GrpE family. Homodimer.

The protein resides in the cytoplasm. Participates actively in the response to hyperosmotic and heat shock by preventing the aggregation of stress-denatured proteins, in association with DnaK and GrpE. It is the nucleotide exchange factor for DnaK and may function as a thermosensor. Unfolded proteins bind initially to DnaJ; upon interaction with the DnaJ-bound protein, DnaK hydrolyzes its bound ATP, resulting in the formation of a stable complex. GrpE releases ADP from DnaK; ATP binding to DnaK triggers the release of the substrate protein, thus completing the reaction cycle. Several rounds of ATP-dependent interactions between DnaJ, DnaK and GrpE are required for fully efficient folding. This Vibrio cholerae serotype O1 (strain ATCC 39315 / El Tor Inaba N16961) protein is Protein GrpE.